Here is a 391-residue protein sequence, read N- to C-terminus: ATP phosphoribosyltransferase regulatory subunit (391 aa).

It belongs to the class-II aminoacyl-tRNA synthetase family. HisZ subfamily. In terms of assembly, heteromultimer composed of HisG and HisZ subunits.

The protein resides in the cytoplasm. It participates in amino-acid biosynthesis; L-histidine biosynthesis; L-histidine from 5-phospho-alpha-D-ribose 1-diphosphate: step 1/9. Functionally, required for the first step of histidine biosynthesis. May allow the feedback regulation of ATP phosphoribosyltransferase activity by histidine. The polypeptide is ATP phosphoribosyltransferase regulatory subunit (Prochlorococcus marinus (strain NATL2A)).